A 985-amino-acid polypeptide reads, in one-letter code: Pro-apoptotic serine protease NMA111 (985 aa).

Residues 79-269 form a serine protease region; sequence VVSIHFSQVA…LPLDRVVRAL (191 aa). Catalysis depends on charge relay system residues His-117, Asp-148, and Ser-231. PDZ domains lie at 287–385 and 771–847; these read WVLK…TVGD and PEEW…VRDA.

The protein belongs to the peptidase S1C family.

It is found in the nucleus. Functionally, nuclear serine protease which mediates apoptosis. The polypeptide is Pro-apoptotic serine protease NMA111 (NMA111) (Kluyveromyces lactis (strain ATCC 8585 / CBS 2359 / DSM 70799 / NBRC 1267 / NRRL Y-1140 / WM37) (Yeast)).